Reading from the N-terminus, the 350-residue chain is IPYWTYNHGDEPLVAISLLDTSNIANQLDSTPRVFYLGGNPETEFPETQEEQQGRHRQKHSYPVGRRSGHHQQEEESEEQNEGNSVLSGVSSEFLAQTFNTEEDTAKRLRSPRDERSQIVRVEGGLRIINPKGKEEEEEKEQSHSHSHREEEEEEEEDEEKQRSEERKNGLEETICSAKIRENIADAAGADLYNPRAGRIRTANSLTLPVLRYLRLSAEYVRLYRNGIYAPHWNINANSLLYVIRGEGRVRIVNFQGDAVFDNKVRKGQLVVVPQNFVVAEQAGEEEGLEYVVFKTNDRAAVSHVQQVLRATPAEVLANAFGLRQRQVTELKLSGNRGPLVHPQSQSQSH.

Disordered stretches follow at residues 37-86 (LGGN…GNSV) and 102-170 (EEDT…RKNG). 3 stretches are compositionally biased toward basic and acidic residues: residues 104–118 (DTAKRLRSPRDERSQ), 141–150 (EQSHSHSHRE), and 160–170 (EKQRSEERKNG). Residues 182 to 329 (ENIADAAGAD…AFGLRQRQVT (148 aa)) form the Cupin type-1 domain.

This sequence belongs to the 11S seed storage protein (globulins) family. In terms of assembly, hexamer; each subunit is composed of an acidic and a basic chain derived from a single precursor and linked by a disulfide bond.

Its function is as follows. This protein found in the seeds of many leguminous and non-leguminous plants is the source of sulfur-containing amino acids in seed meals. The polypeptide is Legumin K (LEGK) (Pisum sativum (Garden pea)).